Here is a 327-residue protein sequence, read N- to C-terminus: Ferrochelatase (327 aa).

2 residues coordinate Fe cation: His-196 and Glu-277.

The protein belongs to the ferrochelatase family.

Its subcellular location is the cytoplasm. The enzyme catalyses heme b + 2 H(+) = protoporphyrin IX + Fe(2+). The protein operates within porphyrin-containing compound metabolism; protoheme biosynthesis; protoheme from protoporphyrin-IX: step 1/1. In terms of biological role, catalyzes the ferrous insertion into protoporphyrin IX. The sequence is that of Ferrochelatase from Gloeobacter violaceus (strain ATCC 29082 / PCC 7421).